A 525-amino-acid chain; its full sequence is Glutamate--cysteine ligase (525 aa).

The protein belongs to the glutamate--cysteine ligase type 1 family. Type 1 subfamily.

The enzyme catalyses L-cysteine + L-glutamate + ATP = gamma-L-glutamyl-L-cysteine + ADP + phosphate + H(+). The protein operates within sulfur metabolism; glutathione biosynthesis; glutathione from L-cysteine and L-glutamate: step 1/2. This Pseudomonas putida (strain W619) protein is Glutamate--cysteine ligase.